The sequence spans 920 residues: Rho guanine nucleotide exchange factor 1 (920 aa).

In terms of domain architecture, RGSL spans 39–230; it reads DQNSQFQSLE…SLYMRHLGVR (192 aa). The disordered stretch occupies residues 231–404; that stretch reads TKSGDKKSGR…PGWRELVPPD (174 aa). Positions 281–311 are enriched in basic and acidic residues; the sequence is DCRHLKVEADAEKPGPADRKGGLGMSSRDRT. Residues 364–380 are compositionally biased toward acidic residues; that stretch reads STEDNGETESPEPGDDG. A phosphoserine mark is found at serine 373, glycine 386, glutamate 390, serine 408, and serine 412. The DH domain maps to 415–604; it reads KRQEVISELL…REILHHVNQA (190 aa). Phosphothreonine is present on residues arginine 432 and threonine 694. Positions 646–759 constitute a PH domain; that stretch reads KLVHEGPLTW…WCNLITETAG (114 aa). Residue tyrosine 737 is modified to Phosphotyrosine; by JAK2. 2 disordered regions span residues 764 to 797 and 840 to 864; these read PAPASRLKPRPSPSSIREPLLSSSENGTGGAEMA and TEEDSGAGPPRDGDGVPGGRAPGPV. Residues 865–894 adopt a coiled-coil conformation; sequence HTQEIEENLLSLEVAIRQLEELEEEFCRLR. Serine 905 carries the post-translational modification Phosphoserine.

As to quaternary structure, interacts with RHOA, GNA12 and GNA13. Homooligomerizes through the coiled coil region. Interacts with CTNNAL1. May interact with CCPG1. In terms of processing, phosphorylated by PKCA. Angiotensin-2 induced Tyr-737 phosphorylation is mediated by JAK2. Isoform 5 is phosphorylated at 'Ser-390'. Ubiquitously expressed.

It is found in the cytoplasm. It localises to the membrane. Functionally, seems to play a role in the regulation of RhoA GTPase by guanine nucleotide-binding alpha-12 (GNA12) and alpha-13 (GNA13) subunits. Acts as a GTPase-activating protein (GAP) for GNA12 and GNA13, and as guanine nucleotide exchange factor (GEF) for RhoA GTPase. Activated G alpha 13/GNA13 stimulates the RhoGEF activity through interaction with the RGS-like domain. This GEF activity is inhibited by binding to activated GNA12. Mediates angiotensin-2-induced RhoA activation. Isoform 3 and isoform 4 do not homooligomerize and show an enhanced RhoGEF activity. In lymphoid follicles, may trigger activation of GNA13 as part of S1PR2-dependent signaling pathway that leads to inhibition of germinal center (GC) B cell growth and migration outside the GC niche. This chain is Rho guanine nucleotide exchange factor 1 (Arhgef1), found in Mus musculus (Mouse).